The sequence spans 643 residues: Threonine--tRNA ligase (643 aa).

The region spanning M1–T62 is the TGS domain. A catalytic region spans residues D239–P537. Zn(2+)-binding residues include C333, H384, and H514.

Belongs to the class-II aminoacyl-tRNA synthetase family. Homodimer. Requires Zn(2+) as cofactor.

Its subcellular location is the cytoplasm. It catalyses the reaction tRNA(Thr) + L-threonine + ATP = L-threonyl-tRNA(Thr) + AMP + diphosphate + H(+). In terms of biological role, catalyzes the attachment of threonine to tRNA(Thr) in a two-step reaction: L-threonine is first activated by ATP to form Thr-AMP and then transferred to the acceptor end of tRNA(Thr). Also edits incorrectly charged L-seryl-tRNA(Thr). The chain is Threonine--tRNA ligase from Lactobacillus gasseri (strain ATCC 33323 / DSM 20243 / BCRC 14619 / CIP 102991 / JCM 1131 / KCTC 3163 / NCIMB 11718 / NCTC 13722 / AM63).